The sequence spans 146 residues: UPF0178 protein BT9727_2823 (146 aa).

The protein belongs to the UPF0178 family.

The protein is UPF0178 protein BT9727_2823 of Bacillus thuringiensis subsp. konkukian (strain 97-27).